A 219-amino-acid chain; its full sequence is Probable 3-beta-hydroxysteroid-Delta(8),Delta(7)-isomerase (219 aa).

4 helical membrane passes run 29 to 49 (ILVP…LISG), 62 to 82 (LMCW…TFVF), 119 to 139 (VEGI…YAIA), and 181 to 201 (FWAY…MIAI). Residues 58-200 (TDRWLMCWWA…SWVVIPTMIA (143 aa)) enclose the EXPERA domain.

The protein belongs to the EBP family.

The protein localises to the endoplasmic reticulum membrane. The catalysed reaction is lathosterol = 5alpha-cholest-8-en-3beta-ol. It functions in the pathway steroid biosynthesis; sterol biosynthesis. In terms of biological role, catalyzes the conversion of Delta(8)-sterols to their corresponding Delta(7)-isomers. This is Probable 3-beta-hydroxysteroid-Delta(8),Delta(7)-isomerase from Oryza sativa subsp. japonica (Rice).